The sequence spans 211 residues: 2,3-bisphosphoglycerate-dependent phosphoglycerate mutase (211 aa).

Substrate is bound by residues 9–16 (RHGQSDWN), 22–23 (TG), arginine 61, 88–91 (ERDY), lysine 99, 115–116 (RR), and 159–160 (GN). The active-site Tele-phosphohistidine intermediate is the histidine 10. Glutamate 88 serves as the catalytic Proton donor/acceptor.

It belongs to the phosphoglycerate mutase family. BPG-dependent PGAM subfamily. As to quaternary structure, homodimer.

The catalysed reaction is (2R)-2-phosphoglycerate = (2R)-3-phosphoglycerate. It functions in the pathway carbohydrate degradation; glycolysis; pyruvate from D-glyceraldehyde 3-phosphate: step 3/5. Catalyzes the interconversion of 2-phosphoglycerate and 3-phosphoglycerate. The chain is 2,3-bisphosphoglycerate-dependent phosphoglycerate mutase from Allorhizobium ampelinum (strain ATCC BAA-846 / DSM 112012 / S4) (Agrobacterium vitis (strain S4)).